The sequence spans 288 residues: Probable ketoamine kinase VC_1539 (288 aa).

Position 92–94 (92–94) interacts with ATP; it reads NYL. Asp-195 serves as the catalytic Proton acceptor.

Belongs to the fructosamine kinase family.

In terms of biological role, ketoamine kinase that phosphorylates ketoamines on the third carbon of the sugar moiety to generate ketoamine 3-phosphate. The protein is Probable ketoamine kinase VC_1539 of Vibrio cholerae serotype O1 (strain ATCC 39315 / El Tor Inaba N16961).